Reading from the N-terminus, the 501-residue chain is Phosphoethanolamine N-methyltransferase 1 (501 aa).

Residues Gly72, Arg77, Asp93, Asp118, Val119, and Asn137 each coordinate S-adenosyl-L-homocysteine. Phosphocholine-binding residues include Ser170, Thr175, Gly176, Arg180, and Tyr187. N-methylethanolamine phosphate is bound by residues 256–257 and Tyr265; that span reads QY. Tyr265 is a phosphocholine binding site. S-adenosyl-L-homocysteine is bound by residues Val274, Ser275, Gly301, Asp323, Asp349, Cys350, and Arg366. Residues Tyr397, Tyr411, Arg415, Tyr417, and Lys483 each coordinate phosphocholine. N-methylethanolamine phosphate-binding positions include Tyr397, Tyr411, 415 to 417, and Lys483; that span reads RGY.

This sequence belongs to the class I-like SAM-binding methyltransferase superfamily. PEAMT family.

It carries out the reaction phosphoethanolamine + S-adenosyl-L-methionine = N-methylethanolamine phosphate + S-adenosyl-L-homocysteine + H(+). The enzyme catalyses N-methylethanolamine phosphate + S-adenosyl-L-methionine = N,N-dimethylethanolamine phosphate + S-adenosyl-L-homocysteine + H(+). The catalysed reaction is N,N-dimethylethanolamine phosphate + S-adenosyl-L-methionine = phosphocholine + S-adenosyl-L-homocysteine + H(+). It functions in the pathway phospholipid metabolism; phosphatidylcholine biosynthesis; phosphocholine from phosphoethanolamine: step 1/1. In terms of biological role, involved in phosphocholine biosynthesis. Catalyzes the N-methylation of phosphoethanolamine, phosphomonomethylethanolamine and phosphodimethylethanolamine, the three methylation steps required to convert phosphoethanolamine to phosphocholine (PC). May be involved in root development. In Zea mays (Maize), this protein is Phosphoethanolamine N-methyltransferase 1.